A 329-amino-acid polypeptide reads, in one-letter code: Ketol-acid reductoisomerase (NADP(+)) (329 aa).

In terms of domain architecture, KARI N-terminal Rossmann spans 2-182; it reads TQLFYDTDAD…GGTRAGILET (181 aa). NADP(+) is bound by residues 25–28, Ser-51, Ser-53, and 83–86; these read YGSQ and DEFQ. His-108 is a catalytic residue. Gly-134 contacts NADP(+). Residues 183–328 form the KARI C-terminal knotted domain; it reads NFKEETETDL…KGLRAMFSWL (146 aa). The Mg(2+) site is built by Asp-191, Glu-195, Glu-227, and Glu-231. Ser-252 serves as a coordination point for substrate.

Belongs to the ketol-acid reductoisomerase family. It depends on Mg(2+) as a cofactor.

The enzyme catalyses (2R)-2,3-dihydroxy-3-methylbutanoate + NADP(+) = (2S)-2-acetolactate + NADPH + H(+). It catalyses the reaction (2R,3R)-2,3-dihydroxy-3-methylpentanoate + NADP(+) = (S)-2-ethyl-2-hydroxy-3-oxobutanoate + NADPH + H(+). Its pathway is amino-acid biosynthesis; L-isoleucine biosynthesis; L-isoleucine from 2-oxobutanoate: step 2/4. The protein operates within amino-acid biosynthesis; L-valine biosynthesis; L-valine from pyruvate: step 2/4. Its function is as follows. Involved in the biosynthesis of branched-chain amino acids (BCAA). Catalyzes an alkyl-migration followed by a ketol-acid reduction of (S)-2-acetolactate (S2AL) to yield (R)-2,3-dihydroxy-isovalerate. In the isomerase reaction, S2AL is rearranged via a Mg-dependent methyl migration to produce 3-hydroxy-3-methyl-2-ketobutyrate (HMKB). In the reductase reaction, this 2-ketoacid undergoes a metal-dependent reduction by NADPH to yield (R)-2,3-dihydroxy-isovalerate. This is Ketol-acid reductoisomerase (NADP(+)) from Prochlorococcus marinus subsp. pastoris (strain CCMP1986 / NIES-2087 / MED4).